A 335-amino-acid chain; its full sequence is Legumin type B (335 aa).

Disordered stretches follow at residues 47 to 87 (PETQ…GNSV) and 102 to 155 (TEED…GRNG). Residues 105–118 (DTAKRLRSPRDKRN) are compositionally biased toward basic and acidic residues. Residues 135–144 (QQEEEEQEEE) show a composition bias toward acidic residues. The Cupin type-1 domain maps to 167–314 (ENIAQPARAD…AFGLRQRQVT (148 aa)).

This sequence belongs to the 11S seed storage protein (globulins) family. As to quaternary structure, hexamer; each subunit is composed of an acidic and a basic chain derived from a single precursor and linked by a disulfide bond.

This protein found in the seeds of many leguminous and non-leguminous plants is the source of sulfur-containing amino acids in seed meals. In Vicia faba (Broad bean), this protein is Legumin type B (LEB7).